The sequence spans 1085 residues: Ubiquitin carboxyl-terminal hydrolase 36 (1085 aa).

Residues 23–36 (GGNSSAAGSSADQA) are compositionally biased toward low complexity. Disordered stretches follow at residues 23 to 47 (GGNS…GSLQ) and 104 to 149 (KVVG…PKPK). The region spanning 173-481 (TGMINVGNTC…NAYIMFYELD (309 aa)) is the USP domain. Cys-182 acts as the Nucleophile in catalysis. His-440 serves as the catalytic Proton acceptor. Disordered stretches follow at residues 489-730 (AANR…NNSK), 745-888 (KSAD…ELLK), 963-1030 (EQRQ…FYNQ), and 1043-1085 (KFNR…QQQS). Over residues 503-518 (STTPVPATTVSSPSPT) the composition is skewed to low complexity. 2 positions are modified to phosphoserine: Ser-514 and Ser-516. Over residues 532 to 542 (GYSNGNAQKTA) the composition is skewed to polar residues. Over residues 588–609 (NGNKSSSTSSNNSSSSNHKSIN) the composition is skewed to low complexity. The span at 642–651 (MTDDHTEKPK) shows a compositional bias: basic and acidic residues. Thr-660 and Thr-664 each carry phosphothreonine. Phosphoserine occurs at positions 674 and 676. Residues 705-730 (TNGHSKTNGSLTNGSASSSVHVNNSK) are compositionally biased toward polar residues. Ser-749 is subject to Phosphoserine. A compositionally biased stretch (acidic residues) spans 749 to 758 (SDDDDDEEES). The span at 768–778 (PQKQSQSQSKA) shows a compositional bias: low complexity. Over residues 779 to 788 (PPSPKTPPSP) the composition is skewed to pro residues. Ser-781 carries the phosphoserine modification. Thr-784 is modified (phosphothreonine). A Phosphoserine modification is found at Ser-787. A compositionally biased stretch (acidic residues) spans 805–818 (EVDDIDDDDDEEEE). Residues 822–844 (KIQTPSKTHRNPFSSSKPSTDSP) are compositionally biased toward polar residues. A Phosphothreonine modification is found at Thr-825. Phosphoserine is present on Ser-843. Phosphothreonine is present on Thr-846. Positions 859–884 (PVKSHQQPRVGNGYQSEATSNGSTIN) are enriched in polar residues. 2 stretches are compositionally biased toward low complexity: residues 987 to 998 (SGSAKGNNASNS) and 1056 to 1066 (QQQRALQRHLA).

It belongs to the peptidase C19 family. In terms of assembly, interacts with atms/PAF1, but not with CycT.

It localises to the nucleus. The protein localises to the nucleolus. The catalysed reaction is Thiol-dependent hydrolysis of ester, thioester, amide, peptide and isopeptide bonds formed by the C-terminal Gly of ubiquitin (a 76-residue protein attached to proteins as an intracellular targeting signal).. Functionally, required for maintaining multiple types of adult stem cells, including male and female germline, epithelial follicle cell and intestinal stem cells. May function as a transcriptional repressor by continually deubiquiting histone H2B at the promoters of genes critical for cellular differentiation, thereby preventing histone H3 'Lys-4' trimethylation (H3K4). Controls selective autophagy activation by ubiquitinated proteins. This chain is Ubiquitin carboxyl-terminal hydrolase 36 (Usp36), found in Drosophila erecta (Fruit fly).